The following is a 1013-amino-acid chain: Tolloid-like protein 1 (1013 aa).

An N-terminal signal peptide occupies residues 1–30; sequence MGLGTLSPRMLVWLVASGIVFYGELWVCAG. The propeptide occupies 31–147; that stretch reads LDYDYTFDGN…GQNEKNRVPR (117 aa). The Peptidase M12A domain occupies 148–347; that stretch reads AATSRTERIW…AQARKLYRCP (200 aa). Residue Asn-169 is glycosylated (N-linked (GlcNAc...) asparagine). 4 disulfides stabilise this stretch: Cys-190/Cys-346, Cys-210/Cys-232, Cys-212/Cys-213, and Cys-349/Cys-375. Position 240 (His-240) interacts with Zn(2+). The active site involves Glu-241. Zn(2+)-binding residues include His-244 and His-250. CUB domains lie at 349-461 and 462-574; these read CGET…YEAI and CGGE…FFKE. N-linked (GlcNAc...) asparagine glycans are attached at residues Asn-359 and Asn-390. Disulfide bonds link Cys-402–Cys-424, Cys-462–Cys-488, Cys-515–Cys-537, Cys-578–Cys-590, Cys-586–Cys-599, Cys-601–Cys-614, Cys-618–Cys-644, Cys-671–Cys-693, Cys-734–Cys-745, Cys-741–Cys-754, Cys-756–Cys-769, Cys-774–Cys-800, Cys-827–Cys-849, Cys-887–Cys-917, and Cys-944–Cys-966. Positions 574 to 615 constitute an EGF-like 1; calcium-binding domain; that stretch reads EEDECAKPDRGGCEQRCLNTLGSYQCACEPGYELGPDRRSCE. Positions 618–730 constitute a CUB 3 domain; sequence CGGLLTKLNG…KGFKAHFFSD (113 aa). N-linked (GlcNAc...) asparagine glycosylation is present at Asn-626. In terms of domain architecture, EGF-like 2; calcium-binding spans 730–770; sequence DKDECSKDNGGCQHECVNTMGSYMCQCRNGFVLHDNKHDCK. CUB domains lie at 774–886 and 887–1003; these read CEQK…HSTE and CGGR…YKSI.

Requires Zn(2+) as cofactor.

The protein localises to the secreted. Protease which processes procollagen C-propeptides, such as chordin, pro-biglycan and pro-lysyl oxidase. Required for the embryonic development. Predominant protease, which in the development, influences dorsal-ventral patterning and skeletogenesis. This chain is Tolloid-like protein 1 (TLL1), found in Homo sapiens (Human).